A 166-amino-acid chain; its full sequence is Lipoprotein signal peptidase (166 aa).

The next 4 helical transmembrane spans lie at 9–29 (ASGALAPWLGISLIVILFDQL), 45–65 (ALTSFFNLVLVYNRGAAFGFL), 71–91 (WQRWAFTALGIGATLVICYLL), and 99–119 (LFSLSLALILGGALGNVIDRL). Active-site residues include Asp126 and Asp144. The chain crosses the membrane as a helical span at residues 135–155 (WHFPAFNLADSAITVGAVLLI).

Belongs to the peptidase A8 family.

It localises to the cell inner membrane. It catalyses the reaction Release of signal peptides from bacterial membrane prolipoproteins. Hydrolyzes -Xaa-Yaa-Zaa-|-(S,diacylglyceryl)Cys-, in which Xaa is hydrophobic (preferably Leu), and Yaa (Ala or Ser) and Zaa (Gly or Ala) have small, neutral side chains.. Its pathway is protein modification; lipoprotein biosynthesis (signal peptide cleavage). Its function is as follows. This protein specifically catalyzes the removal of signal peptides from prolipoproteins. This chain is Lipoprotein signal peptidase, found in Burkholderia vietnamiensis (strain G4 / LMG 22486) (Burkholderia cepacia (strain R1808)).